Reading from the N-terminus, the 427-residue chain is Protein TIFY 6a (427 aa).

The span at 1–25 shows a compositional bias: basic and acidic residues; sequence MERDFLGAIWRKEEAAGKPEEHSDY. Disordered stretches follow at residues 1–32 and 128–154; these read MERD…GGGA and YGVA…HANP. Residues 136–146 are compositionally biased toward pro residues; it reads FPSPSPSPRHP. Residues 196-231 enclose the Tify domain; sequence QNPKVTQMTIFYDGLVNVFDNIPVEKAQELMLLASR. The interval 296–327 is disordered; the sequence is SFSSSNDSAGPKSGGLPLAVTPLSQASPSQPI. The segment covering 317–327 has biased composition (polar residues); that stretch reads PLSQASPSQPI. The Jas motif lies at 343-367; that stretch reads PQARKASLARFLEKRKERVSSVAPY. A Nuclear localization signal motif is present at residues 345-352; it reads ARKASLAR. The disordered stretch occupies residues 361 to 427; sequence VSSVAPYPSS…QEPPSTKLQI (67 aa). Polar residues-rich tracts occupy residues 369–402 and 411–427; these read SSKS…NNCE and RNIS…KLQI.

Belongs to the TIFY/JAZ family. Interacts with COI1A. Interacts with COI1A and COI1B in a coronatine-dependent manner. Coronatine is an analog of jasmonoyl isoleucine (JA-Ile). Ubiquitinated. Targeted for degradation by the SCF(COI1) E3 ubiquitin ligase-proteasome pathway during jasmonate signaling.

It localises to the nucleus. Functionally, repressor of jasmonate responses. This chain is Protein TIFY 6a, found in Oryza sativa subsp. japonica (Rice).